Consider the following 909-residue polypeptide: Zinc finger and BTB domain-containing protein 41 (909 aa).

A BTB domain is found at 88–152 (CDLLIIVEGK…LYTSEFFVYK (65 aa)). A C2H2-type 1 zinc finger spans residues 207–230 (HQCKFCSRHFCYKKSLENHLAKTH). The segment at 252–344 (RSKRNRKCPV…PEAGDSVGNV (93 aa)) is disordered. A compositionally biased stretch (acidic residues) spans 266 to 275 (TSDDEQESGD). Over residues 284 to 295 (NFDKEKSDRNDS) the composition is skewed to basic and acidic residues. The segment covering 296–322 (EDPGSEYNAEEDELEEEMSDEYSDIEE) has biased composition (acidic residues). 13 consecutive C2H2-type zinc fingers follow at residues 361–383 (LQCP…TRVH), 389–411 (FECD…RKKH), 422–445 (HKCP…KRFH), 463–485 (WKCD…MILH), 491–514 (FKCT…EKFH), 518–541 (FPCD…ECTH), 547–569 (WTCF…LRIH), 575–597 (HLCS…LRVH), 603–625 (YECD…KKIH), 631–654 (HQCE…KSVH), 668–690 (HQCD…FRTH), 696–718 (YKCQ…LVIH), and 724–747 (FNCQ…DHVH).

It is found in the nucleus. May be involved in transcriptional regulation. The chain is Zinc finger and BTB domain-containing protein 41 (ZBTB41) from Homo sapiens (Human).